The following is a 64-amino-acid chain: Cytochrome c oxidase subunit 5C (64 aa).

Residues 16-34 (VVKELVIGFSLGLVAGGFW) traverse the membrane as a helical segment.

It belongs to the cytochrome c oxidase subunit 5C family. As to quaternary structure, sweet potato cytochrome C oxidase consists of at least seven different polypeptides species, subunits I, II, III, IV, Va, Vb, and Vc in order of MW.

Its subcellular location is the mitochondrion inner membrane. Functionally, this protein is one of the nuclear-coded polypeptide chains of cytochrome c oxidase, the terminal oxidase in mitochondrial electron transport. This chain is Cytochrome c oxidase subunit 5C (COX5C), found in Ipomoea batatas (Sweet potato).